We begin with the raw amino-acid sequence, 184 residues long: Glutathione-regulated potassium-efflux system ancillary protein KefG (184 aa).

This sequence belongs to the NAD(P)H dehydrogenase (quinone) family. KefG subfamily. Interacts with KefB.

The protein resides in the cell inner membrane. It carries out the reaction a quinone + NADH + H(+) = a quinol + NAD(+). It catalyses the reaction a quinone + NADPH + H(+) = a quinol + NADP(+). In terms of biological role, regulatory subunit of a potassium efflux system that confers protection against electrophiles. Required for full activity of KefB. The polypeptide is Glutathione-regulated potassium-efflux system ancillary protein KefG (Escherichia coli O8 (strain IAI1)).